A 305-amino-acid chain; its full sequence is Tyrosine recombinase XerC (305 aa).

The Core-binding (CB) domain occupies 4 to 95 (TSIQALINKW…AVKNFYRFLE (92 aa)). The Tyr recombinase domain maps to 116–298 (LLPKALSEDD…SIKHLEAVYT (183 aa)). Catalysis depends on residues R159, K182, H250, R253, and H276. Residue Y285 is the O-(3'-phospho-DNA)-tyrosine intermediate of the active site.

The protein belongs to the 'phage' integrase family. XerC subfamily. As to quaternary structure, forms a cyclic heterotetrameric complex composed of two molecules of XerC and two molecules of XerD.

The protein resides in the cytoplasm. In terms of biological role, site-specific tyrosine recombinase, which acts by catalyzing the cutting and rejoining of the recombining DNA molecules. The XerC-XerD complex is essential to convert dimers of the bacterial chromosome into monomers to permit their segregation at cell division. It also contributes to the segregational stability of plasmids. This chain is Tyrosine recombinase XerC, found in Rickettsia africae (strain ESF-5).